A 72-amino-acid chain; its full sequence is Putative ORF1 protein (72 aa).

This chain is Putative ORF1 protein (ORF1), found in Leishmania RNA virus 1 - 1 (isolate Leishmania guyanensis) (LRV-1-1).